The sequence spans 216 residues: Ribosomal RNA small subunit methyltransferase G (216 aa).

S-adenosyl-L-methionine contacts are provided by residues G73, L78, 124–125 (AE), and R139.

The protein belongs to the methyltransferase superfamily. RNA methyltransferase RsmG family.

It localises to the cytoplasm. Its function is as follows. Specifically methylates the N7 position of guanine in position 518 of 16S rRNA. The sequence is that of Ribosomal RNA small subunit methyltransferase G from Paenarthrobacter aurescens (strain TC1).